The following is a 217-amino-acid chain: Uracil-DNA glycosylase (217 aa).

The active-site Proton acceptor is aspartate 62.

This sequence belongs to the uracil-DNA glycosylase (UDG) superfamily. UNG family.

It is found in the cytoplasm. The enzyme catalyses Hydrolyzes single-stranded DNA or mismatched double-stranded DNA and polynucleotides, releasing free uracil.. Functionally, excises uracil residues from the DNA which can arise as a result of misincorporation of dUMP residues by DNA polymerase or due to deamination of cytosine. This chain is Uracil-DNA glycosylase, found in Streptococcus pyogenes serotype M18 (strain MGAS8232).